The chain runs to 112 residues: Cell cycle protein GpsB (112 aa).

The stretch at 42-77 (YQKMADMNNEVVKLSEENNKLKKEVEELRLRVATSR) forms a coiled coil. Positions 75–97 (TSRPSDNKSFSSNNSSSSNNNVD) are disordered. Residues 81–95 (NKSFSSNNSSSSNNN) show a composition bias toward low complexity.

This sequence belongs to the GpsB family. In terms of assembly, forms polymers through the coiled coil domains. Interacts with PBP1, MreC and EzrA.

Its subcellular location is the cytoplasm. Divisome component that associates with the complex late in its assembly, after the Z-ring is formed, and is dependent on DivIC and PBP2B for its recruitment to the divisome. Together with EzrA, is a key component of the system that regulates PBP1 localization during cell cycle progression. Its main role could be the removal of PBP1 from the cell pole after pole maturation is completed. Also contributes to the recruitment of PBP1 to the division complex. Not essential for septum formation. This chain is Cell cycle protein GpsB, found in Staphylococcus haemolyticus (strain JCSC1435).